The following is an 89-amino-acid chain: Small ribosomal subunit protein uS15 (89 aa).

The protein belongs to the universal ribosomal protein uS15 family. Part of the 30S ribosomal subunit. Forms a bridge to the 50S subunit in the 70S ribosome, contacting the 23S rRNA.

Functionally, one of the primary rRNA binding proteins, it binds directly to 16S rRNA where it helps nucleate assembly of the platform of the 30S subunit by binding and bridging several RNA helices of the 16S rRNA. Its function is as follows. Forms an intersubunit bridge (bridge B4) with the 23S rRNA of the 50S subunit in the ribosome. This Roseiflexus castenholzii (strain DSM 13941 / HLO8) protein is Small ribosomal subunit protein uS15.